We begin with the raw amino-acid sequence, 356 residues long: Fructose-bisphosphate aldolase 1, chloroplastic (356 aa).

The N-terminal 6 residues, 1-6 (GLTIRA), are a transit peptide targeting the chloroplast. Residues arginine 53 and lysine 143 each coordinate substrate. The active-site Proton acceptor is glutamate 183. Lysine 225 serves as the catalytic Schiff-base intermediate with dihydroxyacetone-P.

The protein belongs to the class I fructose-bisphosphate aldolase family.

The protein localises to the plastid. It is found in the chloroplast. The catalysed reaction is beta-D-fructose 1,6-bisphosphate = D-glyceraldehyde 3-phosphate + dihydroxyacetone phosphate. The protein operates within carbohydrate degradation; glycolysis; D-glyceraldehyde 3-phosphate and glycerone phosphate from D-glucose: step 4/4. The chain is Fructose-bisphosphate aldolase 1, chloroplastic from Pisum sativum (Garden pea).